We begin with the raw amino-acid sequence, 127 residues long: Aspartate 1-decarboxylase (127 aa).

The active-site Schiff-base intermediate with substrate; via pyruvic acid is serine 25. Serine 25 carries the post-translational modification Pyruvic acid (Ser). A substrate-binding site is contributed by threonine 57. Tyrosine 58 functions as the Proton donor in the catalytic mechanism. 73–75 lines the substrate pocket; it reads GAA.

The protein belongs to the PanD family. Heterooctamer of four alpha and four beta subunits. Pyruvate is required as a cofactor. In terms of processing, is synthesized initially as an inactive proenzyme, which is activated by self-cleavage at a specific serine bond to produce a beta-subunit with a hydroxyl group at its C-terminus and an alpha-subunit with a pyruvoyl group at its N-terminus.

Its subcellular location is the cytoplasm. It catalyses the reaction L-aspartate + H(+) = beta-alanine + CO2. The protein operates within cofactor biosynthesis; (R)-pantothenate biosynthesis; beta-alanine from L-aspartate: step 1/1. Functionally, catalyzes the pyruvoyl-dependent decarboxylation of aspartate to produce beta-alanine. The polypeptide is Aspartate 1-decarboxylase (Neisseria meningitidis serogroup A / serotype 4A (strain DSM 15465 / Z2491)).